The sequence spans 790 residues: Type VI secretion system spike protein VgrG5 (790 aa).

Composition is skewed to basic and acidic residues over residues 753 to 763 and 772 to 790; these read GFRDYRAEMPQ and AYRR…EPTP. The segment at 753–790 is disordered; that stretch reads GFRDYRAEMPQHKPRSAPDAYRRDASRPGAADKDEPTP.

Belongs to the VgrG protein family.

It localises to the secreted. Functionally, part of the H2 type VI secretion system (H2-T6SS) specialized secretion system, which delivers several virulence factors in both prokaryotic and eukaryotic cells during infection. Allows the delivery of the phospholipase effector PldB to target cells where it exerts its toxicity. Also plays a role in VgrG4b and its effector PldA secretion. The sequence is that of Type VI secretion system spike protein VgrG5 from Pseudomonas aeruginosa (strain ATCC 15692 / DSM 22644 / CIP 104116 / JCM 14847 / LMG 12228 / 1C / PRS 101 / PAO1).